A 255-amino-acid chain; its full sequence is uncharacterized protein (255 aa).

The N-terminal stretch at 1-23 is a signal peptide; it reads MKRLNKLVLGISFLFLVISITAG. C24 carries N-palmitoyl cysteine lipidation. Residue C24 is the site of S-diacylglycerol cysteine attachment.

It belongs to the staphylococcal tandem lipoprotein family.

It is found in the cell membrane. This is an uncharacterized protein from Staphylococcus aureus (strain N315).